Here is a 106-residue protein sequence, read N- to C-terminus: Nucleoid-associated protein BBta_7345 (106 aa).

Belongs to the YbaB/EbfC family. In terms of assembly, homodimer.

It is found in the cytoplasm. The protein resides in the nucleoid. Its function is as follows. Binds to DNA and alters its conformation. May be involved in regulation of gene expression, nucleoid organization and DNA protection. The chain is Nucleoid-associated protein BBta_7345 from Bradyrhizobium sp. (strain BTAi1 / ATCC BAA-1182).